A 205-amino-acid chain; its full sequence is MGGKWSKSSIVGWPAVGERMRQTPTAAEGVGAVSRDLDRRGAITSSNTRTTNPDLAWLEAQEEEEVGFPVRPQVPVRPMTYKAAVDLSHFLKEKGGLEGLIYSKKRGDTLDLWVYHTQGYFPDWQNYTPGPGIRYPLTLGWCFKLVPVDPEEVEKANEGENNCLLHPMSQHGMEDEDREVLRWKFDSSLALRHIARERHPEFYQD.

Glycine 2 carries the N-myristoyl glycine; by host lipid modification. Phosphoserine; by host is present on serine 6. Residues 62–65 (EEEE) are acidic; interacts with host PACS1 and PACS2; stabilizes the interaction of NEF/MHC-I with host AP1M1; necessary for MHC-I internalization. Residues 69 to 78 (PVRPQVPVRP) are SH3-binding; interaction with Src family tyrosine kinases. The short motif at 72 to 75 (PQVP) is the PxxP; stabilizes the interaction of NEF/MHC-I with host AP1M1; necessary for MHC-I internalization element. The segment at 108–124 (DTLDLWVYHTQGYFPDW) is mediates dimerization, Nef-PTE1 interaction. The segment at 148–180 (VDPEEVEKANEGENNCLLHPMSQHGMEDEDREV) is binding to ATP6V1H. Positions 164–165 (LL) match the Dileucine internalization motif; necessary for CD4 internalization motif. The Diacidic; necessary for CD4 internalization motif lies at 174–175 (ED).

This sequence belongs to the lentivirus primate group Nef protein family. As to quaternary structure, monomer; cytosolic form. Homodimer; membrane bound form. Interacts with Nef associated p21-activated kinase (PAK2); this interaction activates PAK2. Associates with the Nef-MHC-I-AP1 complex; this complex is required for MHC-I internalization. Interacts (via C-terminus) with host PI3-kinase. Interacts with host PACS1; this interaction seems to be weak. Interacts with host PACS2. Interacts with host LCK and MAPK3; these interactions inhibit the kinase activity of the latter. Interacts with host ATP6V1H; this interaction may play a role in CD4 endocytosis. Associates with the CD4-Nef-AP2 complex; this complex is required for CD4 internalization. Interacts with host AP2 subunit alpha and AP2 subunit sigma2. Interacts with TCR-zeta chain; this interaction up-regulates the Fas ligand (FasL) surface expression. Interacts with host HCK, LYN, and SRC; these interactions activate the Src family kinases. Interacts with MAP3K5; this interaction inhibits the Fas and TNFR-mediated death signals. Interacts with beta-COP and PTE1. Interacts with human RACK1; this increases Nef phosphorylation by PKC. Interacts with TP53; this interaction decreases the half-life of TP53, protecting the infected cell against p53-mediated apoptosis. Post-translationally, the virion-associated Nef proteins are cleaved by the viral protease to release the soluble C-terminal core protein. Nef is probably cleaved concomitantly with viral structural proteins on maturation of virus particles. Myristoylated. In terms of processing, phosphorylated on serine residues, probably by host PKCdelta and theta.

It localises to the host cell membrane. It is found in the virion. Its subcellular location is the secreted. The protein localises to the host Golgi apparatus membrane. Factor of infectivity and pathogenicity, required for optimal virus replication. Alters numerous pathways of T-lymphocyte function and down-regulates immunity surface molecules in order to evade host defense and increase viral infectivity. Alters the functionality of other immunity cells, like dendritic cells, monocytes/macrophages and NK cells. Its function is as follows. In infected CD4(+) T-lymphocytes, down-regulates the surface MHC-I, mature MHC-II, CD4, CD28, CCR5 and CXCR4 molecules. Mediates internalization and degradation of host CD4 through the interaction of with the cytoplasmic tail of CD4, the recruitment of AP-2 (clathrin adapter protein complex 2), internalization through clathrin coated pits, and subsequent transport to endosomes and lysosomes for degradation. Diverts host MHC-I molecules to the trans-Golgi network-associated endosomal compartments by an endocytic pathway to finally target them for degradation. MHC-I down-regulation may involve AP-1 (clathrin adapter protein complex 1) or possibly Src family kinase-ZAP70/Syk-PI3K cascade recruited by PACS2. In consequence infected cells are masked for immune recognition by cytotoxic T-lymphocytes. Decreasing the number of immune receptors also prevents reinfection by more HIV particles (superinfection). Down-regulates host SERINC3 and SERINC5 thereby excluding these proteins from the viral particles. Virion infectivity is drastically higher when SERINC3 or SERINC5 are excluded from the viral envelope, because these host antiviral proteins impair the membrane fusion event necessary for subsequent virion penetration. In terms of biological role, bypasses host T-cell signaling by inducing a transcriptional program nearly identical to that of anti-CD3 cell activation. Interaction with TCR-zeta chain up-regulates the Fas ligand (FasL). Increasing surface FasL molecules and decreasing surface MHC-I molecules on infected CD4(+) cells send attacking cytotoxic CD8+ T-lymphocytes into apoptosis. Functionally, plays a role in optimizing the host cell environment for viral replication without causing cell death by apoptosis. Protects the infected cells from apoptosis in order to keep them alive until the next virus generation is ready to strike. Inhibits the Fas and TNFR-mediated death signals by blocking MAP3K5/ASK1. Decreases the half-life of TP53, protecting the infected cell against p53-mediated apoptosis. Inhibits the apoptotic signals regulated by the Bcl-2 family proteins through the formation of a Nef/PI3-kinase/PAK2 complex that leads to activation of PAK2 and induces phosphorylation of host BAD. Extracellular Nef protein targets CD4(+) T-lymphocytes for apoptosis by interacting with CXCR4 surface receptors. This Human immunodeficiency virus type 1 group M subtype F1 (isolate VI850) (HIV-1) protein is Protein Nef.